The chain runs to 248 residues: Large ribosomal subunit protein uL2 (248 aa).

Positions 203–248 (AHPAGGGHHPKGLTPAPRNAPPGRKVGHIAPRRTGRKKGASRTPTQ) are disordered. Basic residues predominate over residues 227–242 (KVGHIAPRRTGRKKGA).

The protein belongs to the universal ribosomal protein uL2 family. Part of the 50S ribosomal subunit. Forms a bridge to the 30S subunit in the 70S ribosome.

Its function is as follows. One of the primary rRNA binding proteins. Required for association of the 30S and 50S subunits to form the 70S ribosome, for tRNA binding and peptide bond formation. It has been suggested to have peptidyltransferase activity; this is somewhat controversial. Makes several contacts with the 16S rRNA in the 70S ribosome. This Thermofilum pendens (strain DSM 2475 / Hrk 5) protein is Large ribosomal subunit protein uL2.